We begin with the raw amino-acid sequence, 936 residues long: Protein translocase subunit SecA (936 aa).

ATP is bound by residues Gln87, Gly105–Thr109, and Asp515. Zn(2+) is bound by residues Cys920, Cys922, Cys931, and His932.

It belongs to the SecA family. Monomer and homodimer. Part of the essential Sec protein translocation apparatus which comprises SecA, SecYEG and auxiliary proteins SecDF-YajC and YidC. Zn(2+) is required as a cofactor.

The protein localises to the cell inner membrane. The protein resides in the cytoplasm. It carries out the reaction ATP + H2O + cellular proteinSide 1 = ADP + phosphate + cellular proteinSide 2.. Part of the Sec protein translocase complex. Interacts with the SecYEG preprotein conducting channel. Has a central role in coupling the hydrolysis of ATP to the transfer of proteins into and across the cell membrane, serving both as a receptor for the preprotein-SecB complex and as an ATP-driven molecular motor driving the stepwise translocation of polypeptide chains across the membrane. The chain is Protein translocase subunit SecA from Paraburkholderia phytofirmans (strain DSM 17436 / LMG 22146 / PsJN) (Burkholderia phytofirmans).